The following is a 326-amino-acid chain: GTPase IMAP family member 5 (326 aa).

The Cytoplasmic segment spans residues 1-297; sequence MEDHGFEELS…MLCRVTSCLD (297 aa). An AIG1-type G domain is found at 42 to 245; the sequence is SGLLRILLVG…HSNDLFVYTQ (204 aa). Residues 51-59, S72, 169-171, and N206 contribute to the GTP site; these read GKSGCGKSA and HKE. The chain crosses the membrane as a helical; Anchor for type IV membrane protein span at residues 298–318; it reads WHIAVSVLLIVLGLTLLITLI. At 319 to 326 the chain is on the lumenal side; the sequence is NMYIGRWK.

The protein belongs to the TRAFAC class TrmE-Era-EngA-EngB-Septin-like GTPase superfamily. AIG1/Toc34/Toc159-like paraseptin GTPase family. IAN subfamily. As to quaternary structure, interacts with BAD, BAK1, BAX, BCL2, BCL2L1/Bcl-xL and BCL2L11/BimEL. The interaction with BAX is increased, when cells initiate apoptosis upon IL2 withdrawal. Forms a complex with BCL2L1 or MCL1 and HSPA8/HSC70; the interaction between HSPA8 and BCL2L1 or MCL1 is impaired in the absence of GIMAP5. May interact (via N-terminus) with microtubules. As to expression, primarily expressed in spleen, heart, lung and intestine and, at lower levels, in kidney, stomach and muscle. Expressed in thymus and lymph nodes (at protein level). In the spleen, expressed in periarteriolar lymphatic sheets. Isoform 2: Expressed at higher levels in T lymphocytes compared to isoform 1.

It is found in the lysosome membrane. It localises to the endosome. The protein resides in the multivesicular body membrane. The protein localises to the endosome membrane. In terms of biological role, required for mitochondrial integrity and T-cell survival. May contribute to T-cell quiescence. Plays a role in T lymphocyte development and the optimal generation of CD4/CD8 double-positive thymocytes. Inhibitor of GSK3A, possibly by sequestering GSK3A in cytoplasmic vesicles and impairing its translocation to the nucleus. Consequently, impairs GSK3A-dependent transcriptional program and regulation of the DNA damage response occurring during T cells proliferation. Required for the survival of peripheral T cells, natural killer (NK) and NK T-cell development and the maintenance of normal liver function. Promotes the survival of quiescent T-cells. May regulate Ca(2+) homeostasis by modulating lysosomal Ca(2+) stores, preventing its accumulation in the absence of T cell activation. May play a role in mitochondrial DNA segregation in hematopoietic tissues. Is a regulator of liver endothelial cell homeostasis. The polypeptide is GTPase IMAP family member 5 (Gimap5) (Rattus norvegicus (Rat)).